Here is a 329-residue protein sequence, read N- to C-terminus: Quinolinate synthase (329 aa).

Iminosuccinate is bound by residues His-44 and Ser-61. Residue Cys-106 participates in [4Fe-4S] cluster binding. Residues 132-134 and Ser-149 contribute to the iminosuccinate site; that span reads YIN. A [4Fe-4S] cluster-binding site is contributed by Cys-192. Residues 218–220 and Thr-235 contribute to the iminosuccinate site; that span reads HPE. Cys-285 serves as a coordination point for [4Fe-4S] cluster.

Belongs to the quinolinate synthase family. Type 2 subfamily. It depends on [4Fe-4S] cluster as a cofactor.

It localises to the plastid. Its subcellular location is the cyanelle. The enzyme catalyses iminosuccinate + dihydroxyacetone phosphate = quinolinate + phosphate + 2 H2O + H(+). Its pathway is cofactor biosynthesis; NAD(+) biosynthesis; quinolinate from iminoaspartate: step 1/1. Catalyzes the condensation of iminoaspartate with dihydroxyacetone phosphate to form quinolinate. This is Quinolinate synthase from Cyanophora paradoxa.